The chain runs to 201 residues: Recombination protein RecR (201 aa).

A C4-type zinc finger spans residues 57–72 (CRSCRTFTEEDECNIC). Residues 81 to 176 (GQLCVVEMPE…KVTRIAHGIP (96 aa)) enclose the Toprim domain.

It belongs to the RecR family.

May play a role in DNA repair. It seems to be involved in an RecBC-independent recombinational process of DNA repair. It may act with RecF and RecO. This Actinobacillus pleuropneumoniae serotype 5b (strain L20) protein is Recombination protein RecR.